A 342-amino-acid chain; its full sequence is Probable dual-specificity RNA methyltransferase RlmN (342 aa).

Catalysis depends on E91, which acts as the Proton acceptor. The region spanning 97 to 326 is the Radical SAM core domain; it reads YKFGNTACVS…CTVRRELGSD (230 aa). C104 and C331 are oxidised to a cystine. Residues C111, C115, and C118 each coordinate [4Fe-4S] cluster. S-adenosyl-L-methionine is bound by residues 157 to 158, S189, 212 to 214, and N288; these read GE and SLH. C331 acts as the S-methylcysteine intermediate in catalysis.

This sequence belongs to the radical SAM superfamily. RlmN family. The cofactor is [4Fe-4S] cluster.

The protein resides in the cytoplasm. The catalysed reaction is adenosine(2503) in 23S rRNA + 2 reduced [2Fe-2S]-[ferredoxin] + 2 S-adenosyl-L-methionine = 2-methyladenosine(2503) in 23S rRNA + 5'-deoxyadenosine + L-methionine + 2 oxidized [2Fe-2S]-[ferredoxin] + S-adenosyl-L-homocysteine. It carries out the reaction adenosine(37) in tRNA + 2 reduced [2Fe-2S]-[ferredoxin] + 2 S-adenosyl-L-methionine = 2-methyladenosine(37) in tRNA + 5'-deoxyadenosine + L-methionine + 2 oxidized [2Fe-2S]-[ferredoxin] + S-adenosyl-L-homocysteine. In terms of biological role, specifically methylates position 2 of adenine 2503 in 23S rRNA and position 2 of adenine 37 in tRNAs. This is Probable dual-specificity RNA methyltransferase RlmN from Caldanaerobacter subterraneus subsp. tengcongensis (strain DSM 15242 / JCM 11007 / NBRC 100824 / MB4) (Thermoanaerobacter tengcongensis).